The primary structure comprises 504 residues: UDP-N-acetylmuramoylalanine--D-glutamate ligase (504 aa).

129 to 135 serves as a coordination point for ATP; sequence GTNGKTT.

It belongs to the MurCDEF family.

It is found in the cytoplasm. It catalyses the reaction UDP-N-acetyl-alpha-D-muramoyl-L-alanine + D-glutamate + ATP = UDP-N-acetyl-alpha-D-muramoyl-L-alanyl-D-glutamate + ADP + phosphate + H(+). The protein operates within cell wall biogenesis; peptidoglycan biosynthesis. Functionally, cell wall formation. Catalyzes the addition of glutamate to the nucleotide precursor UDP-N-acetylmuramoyl-L-alanine (UMA). The protein is UDP-N-acetylmuramoylalanine--D-glutamate ligase of Burkholderia mallei (strain ATCC 23344).